We begin with the raw amino-acid sequence, 296 residues long: Cutinase est1 (296 aa).

Residues 1 to 35 form the signal peptide; it reads MSVTTPRREASLLSRAVAVAAAAAATVALAAPAQA. The tract at residues 36-57 is disordered; that stretch reads ANPYERGPNPTESMLEARSGPF. A poly(ethylene terephthalate)-binding site is contributed by Y95. S165 functions as the Nucleophile in the catalytic mechanism. Poly(ethylene terephthalate) is bound by residues M166 and W190. Residues D211 and H243 each act as charge relay system in the active site. C276 and C294 are disulfide-bonded.

The protein belongs to the AB hydrolase superfamily. In terms of assembly, monomer.

The protein localises to the secreted. It is found in the periplasm. The enzyme catalyses (ethylene terephthalate)(n) + H2O = (ethylene terephthalate)(n-1) + 4-[(2-hydroxyethoxy)carbonyl]benzoate + H(+). The catalysed reaction is a butanoate ester + H2O = an aliphatic alcohol + butanoate + H(+). It catalyses the reaction cutin + H2O = cutin monomers.. Functionally, catalyzes the hydrolysis of cutin, a polyester that forms the structure of plant cuticle. Shows esterase activity towards p-nitrophenol-linked aliphatic esters (pNP-aliphatic esters). Capable of degrading the plastic poly(ethylene terephthalate) (PET), the most abundant polyester plastic in the world. Can also depolymerize the synthetic polyester poly(epsilon-caprolactone) (PCL). The polypeptide is Cutinase est1 (Thermobifida alba (Thermomonospora alba)).